Here is a 551-residue protein sequence, read N- to C-terminus: Interleukin-2 receptor subunit beta (551 aa).

The N-terminal stretch at 1 to 26 (MAAPALSWRLPLLILLLPLATSWASA) is a signal peptide. The Extracellular segment spans residues 27 to 240 (AVNGTSQFTC…TKPAALGKDT (214 aa)). Residues asparagine 29, asparagine 43, and asparagine 71 are each glycosylated (N-linked (GlcNAc...) asparagine). 3 cysteine pairs are disulfide-bonded: cysteine 36–cysteine 46, cysteine 59–cysteine 110, and cysteine 74–cysteine 86. The 101-residue stretch at 134–234 (APISLQVVHV…QPLAFRTKPA (101 aa)) folds into the Fibronectin type-III domain. Asparagine 149 carries an N-linked (GlcNAc...) asparagine glycan. A WSXWS motif motif is present at residues 220-224 (WSPWS). Residues 241–265 (IPWLGHLLVGLSGAFGFIILVYLLI) traverse the membrane as a helical segment. Over 266–551 (NCRNTGPWLK…LQGQDPTHLV (286 aa)) the chain is Cytoplasmic. The Box 1 motif signature appears at 278-286 (LKCNTPDPS). Disordered stretches follow at residues 389–416 (EEDP…GEDD) and 432–486 (PSLL…VDFQ).

It belongs to the type I cytokine receptor family. Type 4 subfamily. As to quaternary structure, non-covalent dimer of an alpha and a beta subunit. IL2R exists in 3 different forms: a high affinity dimer, an intermediate affinity monomer (beta subunit), and a low affinity monomer (alpha subunit). The high and intermediate affinity forms also associate with a gamma subunit. Interacts with SHB upon interleukin stimulation. (Microbial infection) Interacts with HTLV-1 accessory protein p12I.

The protein resides in the cell membrane. Receptor for interleukin-2. This beta subunit is involved in receptor mediated endocytosis and transduces the mitogenic signals of IL2. Probably in association with IL15RA, involved in the stimulation of neutrophil phagocytosis by IL15. This chain is Interleukin-2 receptor subunit beta, found in Homo sapiens (Human).